Here is an 88-residue protein sequence, read N- to C-terminus: U1-hexatoxin-Iw1d (88 aa).

The signal sequence occupies residues Leu-1–Ala-17. Pyrrolidone carboxylic acid is present on Gln-18. Intrachain disulfides connect Cys-20–Cys-31, Cys-25–Cys-39, Cys-30–Cys-65, Cys-49–Cys-73, and Cys-67–Cys-80. Positions Arg-86–Glu-88 are excised as a propeptide.

Belongs to the MIT-like AcTx family. Expressed by the venom gland.

Its subcellular location is the secreted. The chain is U1-hexatoxin-Iw1d from Illawarra wisharti (Illawarra funnel-web spider).